Here is a 273-residue protein sequence, read N- to C-terminus: Putative pyruvate, phosphate dikinase regulatory protein 2 (273 aa).

An ADP-binding site is contributed by 151-158 (GISRTSKT).

It belongs to the pyruvate, phosphate/water dikinase regulatory protein family. PDRP subfamily.

It catalyses the reaction N(tele)-phospho-L-histidyl/L-threonyl-[pyruvate, phosphate dikinase] + ADP = N(tele)-phospho-L-histidyl/O-phospho-L-threonyl-[pyruvate, phosphate dikinase] + AMP + H(+). The catalysed reaction is N(tele)-phospho-L-histidyl/O-phospho-L-threonyl-[pyruvate, phosphate dikinase] + phosphate + H(+) = N(tele)-phospho-L-histidyl/L-threonyl-[pyruvate, phosphate dikinase] + diphosphate. In terms of biological role, bifunctional serine/threonine kinase and phosphorylase involved in the regulation of the pyruvate, phosphate dikinase (PPDK) by catalyzing its phosphorylation/dephosphorylation. In Staphylococcus saprophyticus subsp. saprophyticus (strain ATCC 15305 / DSM 20229 / NCIMB 8711 / NCTC 7292 / S-41), this protein is Putative pyruvate, phosphate dikinase regulatory protein 2.